Reading from the N-terminus, the 138-residue chain is Small ribosomal subunit protein uS11c (138 aa).

Residues Met1 to Arg23 are disordered. Basic residues predominate over residues Gly9–Arg23.

This sequence belongs to the universal ribosomal protein uS11 family. As to quaternary structure, part of the 30S ribosomal subunit.

It localises to the plastid. The protein localises to the chloroplast. The polypeptide is Small ribosomal subunit protein uS11c (Coffea arabica (Arabian coffee)).